Reading from the N-terminus, the 420-residue chain is Serine--tRNA ligase (420 aa).

227–229 lines the L-serine pocket; that stretch reads TSE. ATP is bound by residues 258–260 and Val-274; that span reads RRE. Residue Glu-281 coordinates L-serine. 345-348 serves as a coordination point for ATP; the sequence is EVTS. Thr-379 provides a ligand contact to L-serine.

This sequence belongs to the class-II aminoacyl-tRNA synthetase family. Type-1 seryl-tRNA synthetase subfamily. Homodimer. The tRNA molecule binds across the dimer.

It is found in the cytoplasm. It catalyses the reaction tRNA(Ser) + L-serine + ATP = L-seryl-tRNA(Ser) + AMP + diphosphate + H(+). The enzyme catalyses tRNA(Sec) + L-serine + ATP = L-seryl-tRNA(Sec) + AMP + diphosphate + H(+). The protein operates within aminoacyl-tRNA biosynthesis; selenocysteinyl-tRNA(Sec) biosynthesis; L-seryl-tRNA(Sec) from L-serine and tRNA(Sec): step 1/1. Its function is as follows. Catalyzes the attachment of serine to tRNA(Ser). Is also able to aminoacylate tRNA(Sec) with serine, to form the misacylated tRNA L-seryl-tRNA(Sec), which will be further converted into selenocysteinyl-tRNA(Sec). The chain is Serine--tRNA ligase from Acidothermus cellulolyticus (strain ATCC 43068 / DSM 8971 / 11B).